The sequence spans 540 residues: Anti-sigma-I factor RsgI7 (540 aa).

The RsgI N-terminal anti-sigma domain occupies 1 to 48 (MRAMVVDMNDKYAVVVNKEGQYIKIKRKAEHRLGYQVELPDRVIGFER). Topologically, residues 1–50 (MRAMVVDMNDKYAVVVNKEGQYIKIKRKAEHRLGYQVELPDRVIGFERRT) are cytoplasmic. Residues 51–73 (LLKVVSVAAALLIVSSISFAVYS) traverse the membrane as a helical segment. The Extracellular segment spans residues 74–540 (YNLPYSYVNV…PGKEILKKRC (467 aa)). 5 stretches are compositionally biased toward basic and acidic residues: residues 238–256 (DIKK…KKVN), 319–329 (SGIDKGNKDSK), 338–351 (NDVK…KTNS), 359–370 (VSKDNKNDKADG), and 398–419 (SKDD…EDNK). Disordered stretches follow at residues 238 to 429 (DIKK…CPQY) and 481 to 540 (QEEQ…KKRC). Positions 451–501 (KEDMTKQNDEWFKKMQEEQKKQYDEWLKKMQEEQKKQHDEWVKKMEEMKNT) form a coiled coil.

Interacts (via RsgI N-terminal anti-sigma domain) with SigI7.

It localises to the cell membrane. Functionally, anti-sigma factor for SigI7. Negatively regulates SigI7 activity through direct interaction. The protein is Anti-sigma-I factor RsgI7 of Acetivibrio thermocellus (strain ATCC 27405 / DSM 1237 / JCM 9322 / NBRC 103400 / NCIMB 10682 / NRRL B-4536 / VPI 7372) (Clostridium thermocellum).